The chain runs to 451 residues: Adenylyltransferase and sulfurtransferase MOCS3-1 (451 aa).

Positions 42 to 62 (GEDSDEAEESSNDMPTPQTKL) are disordered. Residues 43–52 (EDSDEAEESS) are compositionally biased toward acidic residues. The residue at position 60 (threonine 60) is a Phosphothreonine. Residues glycine 99, aspartate 120, 127 to 131 (SNLHR), lysine 144, and 188 to 189 (DN) contribute to the ATP site. Residues cysteine 229 and cysteine 232 each coordinate Zn(2+). Cysteine 246 (glycyl thioester intermediate; for adenylyltransferase activity) is an active-site residue. The Zn(2+) site is built by cysteine 304 and cysteine 307. Positions 353–449 (QSQPHLLLDV…WTGSVDATFP (97 aa)) constitute a Rhodanese domain. The active-site Cysteine persulfide intermediate; for sulfurtransferase activity is cysteine 408.

It in the N-terminal section; belongs to the HesA/MoeB/ThiF family. UBA4 subfamily. Zn(2+) serves as cofactor.

Its subcellular location is the cytoplasm. It catalyses the reaction [molybdopterin-synthase sulfur-carrier protein]-C-terminal Gly-Gly + ATP + H(+) = [molybdopterin-synthase sulfur-carrier protein]-C-terminal Gly-Gly-AMP + diphosphate. The enzyme catalyses [molybdopterin-synthase sulfur-carrier protein]-C-terminal Gly-Gly-AMP + S-sulfanyl-L-cysteinyl-[cysteine desulfurase] + AH2 = [molybdopterin-synthase sulfur-carrier protein]-C-terminal-Gly-aminoethanethioate + L-cysteinyl-[cysteine desulfurase] + A + AMP + 2 H(+). It functions in the pathway tRNA modification; 5-methoxycarbonylmethyl-2-thiouridine-tRNA biosynthesis. The protein operates within cofactor biosynthesis; molybdopterin biosynthesis. Functionally, plays a central role in 2-thiolation of mcm(5)S(2)U at tRNA wobble positions of cytosolic tRNA(Lys), tRNA(Glu) and tRNA(Gln). Also essential during biosynthesis of the molybdenum cofactor. Acts by mediating the C-terminal thiocarboxylation of sulfur carriers URM1 and MOCS2A. Its N-terminus first activates URM1 and MOCS2A as acyl-adenylates (-COAMP), then the persulfide sulfur on the catalytic cysteine is transferred to URM1 and MOCS2A to form thiocarboxylation (-COSH) of their C-terminus. The reaction probably involves hydrogen sulfide that is generated from the persulfide intermediate and that acts as a nucleophile towards URM1 and MOCS2A. Subsequently, a transient disulfide bond is formed. Does not use thiosulfate as sulfur donor; NFS1 probably acting as a sulfur donor for thiocarboxylation reactions. This Drosophila pseudoobscura pseudoobscura (Fruit fly) protein is Adenylyltransferase and sulfurtransferase MOCS3-1.